The sequence spans 296 residues: GTPase Era (296 aa).

The region spanning 3-170 (KSGFVTIIGR…IELMVKHLNE (168 aa)) is the Era-type G domain. A G1 region spans residues 11–18 (GRPNVGKS). 11-18 (GRPNVGKS) is a GTP binding site. Residues 37 to 41 (QTTRN) form a G2 region. Positions 58 to 61 (DTPG) are G3. Residues 58 to 62 (DTPGM) and 120 to 123 (NKID) each bind GTP. The tract at residues 120-123 (NKID) is G4. The segment at 149 to 151 (ISA) is G5. A KH type-2 domain is found at 201–277 (LSQEVPHGIA…NMKIWVKVKK (77 aa)).

Belongs to the TRAFAC class TrmE-Era-EngA-EngB-Septin-like GTPase superfamily. Era GTPase family. As to quaternary structure, monomer.

The protein resides in the cytoplasm. The protein localises to the cell membrane. An essential GTPase that binds both GDP and GTP, with rapid nucleotide exchange. Plays a role in 16S rRNA processing and 30S ribosomal subunit biogenesis and possibly also in cell cycle regulation and energy metabolism. The sequence is that of GTPase Era from Clostridium acetobutylicum (strain ATCC 824 / DSM 792 / JCM 1419 / IAM 19013 / LMG 5710 / NBRC 13948 / NRRL B-527 / VKM B-1787 / 2291 / W).